We begin with the raw amino-acid sequence, 513 residues long: Histidine ammonia-lyase (513 aa).

The segment at residues 142–144 (ASG) is a cross-link (5-imidazolinone (Ala-Gly)). 2,3-didehydroalanine (Ser) is present on Ser-143.

Belongs to the PAL/histidase family. Post-translationally, contains an active site 4-methylidene-imidazol-5-one (MIO), which is formed autocatalytically by cyclization and dehydration of residues Ala-Ser-Gly.

The protein resides in the cytoplasm. The enzyme catalyses L-histidine = trans-urocanate + NH4(+). It functions in the pathway amino-acid degradation; L-histidine degradation into L-glutamate; N-formimidoyl-L-glutamate from L-histidine: step 1/3. This chain is Histidine ammonia-lyase, found in Hyphomonas neptunium (strain ATCC 15444).